The primary structure comprises 462 residues: Chromosomal replication initiator protein DnaA (462 aa).

A domain I, interacts with DnaA modulators region spans residues 1-84; sequence MAVSLWQQCI…RFDIGSRPSA (84 aa). The tract at residues 84 to 125 is domain II; it reads APKPIQATAAVVKPKLESSPQKSQTSFNVNAPEPAATANHRS. Positions 126–342 are domain III, AAA+ region; sequence NINPTYQFEN…GALNRVIANA (217 aa). Glycine 170, glycine 172, lysine 173, and threonine 174 together coordinate ATP. The segment at 343–462 is domain IV, binds dsDNA; sequence NFTGRPITID…YANLIRTLSS (120 aa).

This sequence belongs to the DnaA family. As to quaternary structure, oligomerizes as a right-handed, spiral filament on DNA at oriC.

The protein resides in the cytoplasm. Its function is as follows. Plays an essential role in the initiation and regulation of chromosomal replication. ATP-DnaA binds to the origin of replication (oriC) to initiate formation of the DNA replication initiation complex once per cell cycle. Binds the DnaA box (a 9 base pair repeat at the origin) and separates the double-stranded (ds)DNA. Forms a right-handed helical filament on oriC DNA; dsDNA binds to the exterior of the filament while single-stranded (ss)DNA is stabiized in the filament's interior. The ATP-DnaA-oriC complex binds and stabilizes one strand of the AT-rich DNA unwinding element (DUE), permitting loading of DNA polymerase. After initiation quickly degrades to an ADP-DnaA complex that is not apt for DNA replication. Binds acidic phospholipids. The chain is Chromosomal replication initiator protein DnaA from Shewanella woodyi (strain ATCC 51908 / MS32).